Consider the following 625-residue polypeptide: MWKTARDSVCLICRSAATTTTSTSARASLEPWAGQRTFSTRREQRPSRMVLSDRVARPPPVRGPGEGNKKPRNKPDGPWAGMNRRVANIDPRKAPKPKPVEEDSRRDKRDKNTKGQKALKMQRALATISYGQRTSIKERMQEIQAFDQFDLLPVVKEAIAQEALKGMTEIKPTPVQRLAIPALLGQPMGRKPRRPKSDNGREEFLLAAETGSGKTLAYLVPAVNAIKKGDADDELVASYNERLAAEKERRGGAPVSEWIEKFEPHPNTARPRVVVLVPTAELVDQVTSVAKKLAHYTKFKVRPLSASISPLRNQRNLYSPIGVDMIVSTPHLLATIAKSDPNVLSRVSHLVIDEADSLLDRSFSGDTTSIVDRAMPSLKQLILCSATIPRRLDTYMEEQFPYINRITTPNLHAIPRRVQLGVIDVSKDPYRNNKMLACADAIWSIGKEAAKHEGPKSEIDVKRIMVFVNERETTQQVADYLVSKGIDAIALHRDTEEHRKSEMLASFTSNEPMKISRPADDDVAAAAAEGGKAGGAVSSSPTRRHLPNTKVIVATDLASRGIDTLAVRYVVLYDVPHTTIDFIHRLGRAGRMNRRGRGIVLVGKDDRRDVVAEVKESMFMGQALV.

The N-terminal 16 residues, 1 to 16 (MWKTARDSVCLICRSA), are a transit peptide targeting the mitochondrion. Residues 19–28 (TTTSTSARAS) are compositionally biased toward low complexity. A disordered region spans residues 19-119 (TTTSTSARAS…DKNTKGQKAL (101 aa)). Positions 90–113 (DPRKAPKPKPVEEDSRRDKRDKNT) are enriched in basic and acidic residues. A Q motif motif is present at residues 144 to 177 (QAFDQFDLLPVVKEAIAQEALKGMTEIKPTPVQR). The Helicase ATP-binding domain maps to 195–406 (PKSDNGREEF…EEQFPYINRI (212 aa)). ATP is bound at residue 208–215 (AETGSGKT). The DEAD box motif lies at 353–356 (DEAD). Residues 453 to 625 (EGPKSEIDVK…ESMFMGQALV (173 aa)) enclose the Helicase C-terminal domain.

This sequence belongs to the DEAD box helicase family. MRH4 subfamily.

The protein localises to the mitochondrion. The enzyme catalyses ATP + H2O = ADP + phosphate + H(+). Functionally, ATP-binding RNA helicase involved in mitochondrial RNA metabolism. Required for maintenance of mitochondrial DNA. This Neurospora crassa (strain ATCC 24698 / 74-OR23-1A / CBS 708.71 / DSM 1257 / FGSC 987) protein is ATP-dependent RNA helicase mrh4, mitochondrial (drh-15).